Reading from the N-terminus, the 1410-residue chain is non-specific serine/threonine protein kinase (1410 aa).

Residues Thr27–Phe299 enclose the Protein kinase domain. Residues Leu33–Thr41 and Lys54 contribute to the ATP site. Asp147 (proton acceptor) is an active-site residue. HEAT repeat units lie at residues Thr441 to His478, Asn485 to Leu525, Arg556 to Arg594, Lys596 to Pro633, and Thr635 to Val672. WD repeat units lie at residues Phe1037 to Ser1076, Ala1187 to Ala1226, and Gly1230 to Val1273.

It belongs to the protein kinase superfamily. Ser/Thr protein kinase family. In terms of assembly, component of the autophagy-specific VPS34 PI3-kinase complex I composed of VPS15, VPS30, VPS34, ATG14 and ATG38; and of the VPS34 PI3-kinase complex II composed of VPS15, VPS30, VPS34 and VPS38. Autophosphorylated.

The protein localises to the golgi apparatus. The protein resides in the trans-Golgi network membrane. It is found in the endosome membrane. The enzyme catalyses L-seryl-[protein] + ATP = O-phospho-L-seryl-[protein] + ADP + H(+). The catalysed reaction is L-threonyl-[protein] + ATP = O-phospho-L-threonyl-[protein] + ADP + H(+). In terms of biological role, serine/threonine-protein kinase that plays a role in signaling in modulation of host immune response, intracellular survival and virulence. Required for impediment of phagosomal maturation in THP-1 macrophages. Regulatory subunit of the autophagy-specific VPS34 PI3-kinase complex I essential to recruit the ATG8-phosphatidylinositol conjugate and the ATG12-ATG5 conjugate to the pre-autophagosomal structure. Within the PS34 PI3-kinase complex I, VPS15-mediated phosphorylation of VPS34 may be required for recruiting VPS34 to the membrane but not for activation of its PI3K activity. Is also involved in endosome-to-Golgi retrograde transport as part of the VPS34 PI3-kinase complex II. This second complex is required for the endosome-to-Golgi retrieval of PEP1 and KEX2, and the recruitment of VPS5 and VPS7, two components of the retromer complex, to endosomal membranes (probably through the synthesis of a specific pool of phosphatidylinositol 3-phosphate recruiting the retromer to the endosomes). By regulating VPS34 kinase activity, VPS15 appears to be essential for the efficient delivery of soluble hydrolases to the yeast vacuole. This Candida glabrata (strain ATCC 2001 / BCRC 20586 / JCM 3761 / NBRC 0622 / NRRL Y-65 / CBS 138) (Yeast) protein is non-specific serine/threonine protein kinase.